Here is a 219-residue protein sequence, read N- to C-terminus: Glutathione S-transferase U19 (219 aa).

In terms of domain architecture, GST N-terminal spans 3 to 82; it reads NEVILLDFWP…YIDEVWSHKN (80 aa). Residues 13–14, 39–40, 53–54, and 66–67 each bind glutathione; these read SM, NK, KI, and ES. A GST C-terminal domain is found at 88-208; sequence DPYLRAQARF…LPDPEKVTEF (121 aa). S198 carries the post-translational modification Phosphoserine.

Belongs to the GST superfamily. Tau family.

Its subcellular location is the cytoplasm. It is found in the cytosol. The enzyme catalyses RX + glutathione = an S-substituted glutathione + a halide anion + H(+). Its function is as follows. Catalyzes the glutathionylation of 12-oxophytodienoate (OPDA). In vitro, possesses glutathione S-transferase activity toward 1-chloro-2,4-dinitrobenzene (CDNB) and benzyl isothiocyanate (BITC), and glutathione peroxidase activity toward cumene hydroperoxide. This is Glutathione S-transferase U19 (GSTU19) from Arabidopsis thaliana (Mouse-ear cress).